A 303-amino-acid chain; its full sequence is MQKFDTRTFQGLILTLQDYWARQGCTIVQPLDMEVGAGTSHPMTCLRALGPEPMATAYVQPSRRPTDGRYGENPNRLQHYYQFQVVIKPSPENIQELYLGSLKELGMDPTIHDIRFVEDNWENPTLGAWGLGWEVWLNGMEVTQFTYFQQVGGLECKPVTGEITYGLERLAMYIQGVDSVYDLVWSDGPLGKTTYGDVFHQNEVEQSTYNFEYADVDFLFTCFEQYEKEAQQLLALENPLPLPAYERILKAAHSFNLLDARKAISVTERQRYILRIRTLTKAVAEAYYASREALGFPMCNKDK.

Belongs to the class-II aminoacyl-tRNA synthetase family. In terms of assembly, tetramer of two alpha and two beta subunits.

Its subcellular location is the cytoplasm. The enzyme catalyses tRNA(Gly) + glycine + ATP = glycyl-tRNA(Gly) + AMP + diphosphate. The polypeptide is Glycine--tRNA ligase alpha subunit (Salmonella paratyphi A (strain ATCC 9150 / SARB42)).